A 285-amino-acid chain; its full sequence is UPF0014 membrane protein STAR2 (285 aa).

Transmembrane regions (helical) follow at residues 30–50 (FLVG…AVAL), 64–84 (YAMA…QFIF), 88–108 (SAAW…YTAG), 119–139 (HIAA…LVAL), 148–168 (YIIP…GVTM), 203–225 (SLVI…ALPG), and 240–262 (AIQL…SILS).

The protein belongs to the UPF0014 family. In terms of assembly, interacts with STAR2. As to expression, expressed in roots.

The protein localises to the membrane. In terms of biological role, associates with STAR2 to form a functional transmembrane ABC transporter required for detoxification of aluminum (Al) in roots. Can specifically transport UDP-glucose. The polypeptide is UPF0014 membrane protein STAR2 (Oryza sativa subsp. japonica (Rice)).